Here is a 67-residue protein sequence, read N- to C-terminus: Colostrum trypsin inhibitor (67 aa).

The BPTI/Kunitz inhibitor domain maps to 8 to 58 (CQLPQARGPCKAALLRYFYNSTSNACEPFTYGGCQGNNBNFETTEMCLRIC). 3 cysteine pairs are disulfide-bonded: Cys8–Cys58, Cys17–Cys41, and Cys33–Cys54. Asn27 carries an N-linked (GlcNAc...) asparagine glycan.

The protein resides in the secreted. In Bos taurus (Bovine), this protein is Colostrum trypsin inhibitor.